A 301-amino-acid chain; its full sequence is Small ribosomal subunit protein uS2 (301 aa).

The segment at 237–301 (PTESWNDTVV…QDWSNSTSQW (65 aa)) is disordered. The span at 264-278 (PQYAPAPQAAAAPVA) shows a compositional bias: low complexity.

The protein belongs to the universal ribosomal protein uS2 family. As to quaternary structure, component of the small ribosomal subunit. Mature ribosomes consist of a small (40S) and a large (60S) subunit. The 40S subunit contains about 33 different proteins and 1 molecule of RNA (18S). The 60S subunit contains about 49 different proteins and 3 molecules of RNA (28S, 5.8S and 5S). Interacts with ribosomal protein S21.

Its subcellular location is the cytoplasm. Functionally, required for the assembly and/or stability of the 40S ribosomal subunit. Required for the processing of the 20S rRNA-precursor to mature 18S rRNA in a late step of the maturation of 40S ribosomal subunits. This is Small ribosomal subunit protein uS2 from Diaphorina citri (Asian citrus psyllid).